The sequence spans 209 residues: uncharacterized protein (209 aa).

This is an uncharacterized protein from Caldicellulosiruptor saccharolyticus (Caldocellum saccharolyticum).